Reading from the N-terminus, the 85-residue chain is Small ribosomal subunit protein uS17 (85 aa).

This sequence belongs to the universal ribosomal protein uS17 family. In terms of assembly, part of the 30S ribosomal subunit.

In terms of biological role, one of the primary rRNA binding proteins, it binds specifically to the 5'-end of 16S ribosomal RNA. The chain is Small ribosomal subunit protein uS17 from Citrifermentans bemidjiense (strain ATCC BAA-1014 / DSM 16622 / JCM 12645 / Bem) (Geobacter bemidjiensis).